Here is a 426-residue protein sequence, read N- to C-terminus: Glutamate-1-semialdehyde 2,1-aminomutase (426 aa).

Position 265 is an N6-(pyridoxal phosphate)lysine (lysine 265).

This sequence belongs to the class-III pyridoxal-phosphate-dependent aminotransferase family. HemL subfamily. As to quaternary structure, homodimer. It depends on pyridoxal 5'-phosphate as a cofactor.

The protein resides in the cytoplasm. The catalysed reaction is (S)-4-amino-5-oxopentanoate = 5-aminolevulinate. It participates in porphyrin-containing compound metabolism; protoporphyrin-IX biosynthesis; 5-aminolevulinate from L-glutamyl-tRNA(Glu): step 2/2. The polypeptide is Glutamate-1-semialdehyde 2,1-aminomutase (Paraburkholderia phymatum (strain DSM 17167 / CIP 108236 / LMG 21445 / STM815) (Burkholderia phymatum)).